The following is a 411-amino-acid chain: Adenylosuccinate synthetase (411 aa).

Residues 11–17 (GDEGKGK) and 39–41 (GHT) contribute to the GTP site. Asp12 (proton acceptor) is an active-site residue. The Mg(2+) site is built by Asp12 and Gly39. IMP-binding positions include 12–15 (DEGK), 37–40 (NAGH), Thr121, Arg135, Gln215, Thr230, and Arg294. His40 functions as the Proton donor in the catalytic mechanism. 290-296 (TTTKRPR) contacts substrate. GTP contacts are provided by residues Arg296, 322–324 (KLD), and 400–402 (STS).

This sequence belongs to the adenylosuccinate synthetase family. As to quaternary structure, homodimer. Mg(2+) serves as cofactor.

It localises to the cytoplasm. The catalysed reaction is IMP + L-aspartate + GTP = N(6)-(1,2-dicarboxyethyl)-AMP + GDP + phosphate + 2 H(+). It participates in purine metabolism; AMP biosynthesis via de novo pathway; AMP from IMP: step 1/2. Its function is as follows. Plays an important role in the de novo pathway of purine nucleotide biosynthesis. Catalyzes the first committed step in the biosynthesis of AMP from IMP. The polypeptide is Adenylosuccinate synthetase (Helicobacter pylori (strain P12)).